Consider the following 182-residue polypeptide: Lipoprotein signal peptidase (182 aa).

Helical transmembrane passes span 15–35, 44–64, 65–85, and 97–117; these read LYIG…FLVI, LEVL…FVFG, AFQD…VFLI, and PWGW…KFFV. Active-site residues include D140 and D162. A helical membrane pass occupies residues 155 to 175; that stretch reads WPAFNVADSCVTIGLTILIFT.

It belongs to the peptidase A8 family.

The protein localises to the cell inner membrane. The enzyme catalyses Release of signal peptides from bacterial membrane prolipoproteins. Hydrolyzes -Xaa-Yaa-Zaa-|-(S,diacylglyceryl)Cys-, in which Xaa is hydrophobic (preferably Leu), and Yaa (Ala or Ser) and Zaa (Gly or Ala) have small, neutral side chains.. It functions in the pathway protein modification; lipoprotein biosynthesis (signal peptide cleavage). Its function is as follows. This protein specifically catalyzes the removal of signal peptides from prolipoproteins. This is Lipoprotein signal peptidase from Leptospira borgpetersenii serovar Hardjo-bovis (strain L550).